A 268-amino-acid polypeptide reads, in one-letter code: Unknown seed protein 30.1 (268 aa).

A signal peptide spans 1–22; sequence MEFAHLTVLSLFCLAFVGITAT. The BURP domain occupies 68-259; it reads LFFEHDLHPR…GNKAAAWVPN (192 aa).

In Vicia faba (Broad bean), this protein is Unknown seed protein 30.1.